Here is a 182-residue protein sequence, read N- to C-terminus: MKKLLKKLVVLFLSSLVIIFNVWYFIICAFSPEYYQNTNLTSNEIIRFEKLYHIDFPDETKFIKAREYLAGPGGDTSAVLYVSLPTKRVEKVLSDYTYMKINYTDNVGSMYGVDVSKSVAGLTTLTFGTYDKKGTFYNMKHDDDWMYKGTDWNLYFWTAASYNAVIFVFVLVIVKQMNKILN.

Residues 1–29 form the signal peptide; that stretch reads MKKLLKKLVVLFLSSLVIIFNVWYFIICA. A helical membrane pass occupies residues 152 to 174; that stretch reads WNLYFWTAASYNAVIFVFVLVIV.

The protein localises to the membrane. This is an uncharacterized protein from Bacillus subtilis (strain 168).